The following is a 264-amino-acid chain: MIYRIISHIPSIFFKPAYDLYERYLLEKVKAGVIPKHVAIIMDGNRRWARKREKPPWYGHFFGSKKLEEIVEWCHELGIRILTVYAFSTENFKRSKEEVDRLMKLFEEKFRELVTDRRVHEYGIRVNVMGRKELLPKNVREAAEEAERVTRKYNNYFLNIALAYGGRSEIVDAIKDIVNDVLEGRLKLEDINEEIVRKYLYVPNMPDPDIVIRTGGEVRISNFLLYQIAYSELFFVDVYFPEFRKIDFLRIIREFQKRERRFGR.

Asp-43 is a catalytic residue. Residue Asp-43 participates in Mg(2+) binding. Residues 44–47 (GNRR), Trp-48, His-60, and 88–90 (STE) contribute to the substrate site. Asn-91 functions as the Proton acceptor in the catalytic mechanism. Substrate-binding positions include Phe-92, Arg-94, Arg-213, and 219–221 (RIS). Position 232 (Glu-232) interacts with Mg(2+).

Belongs to the UPP synthase family. Homodimer. Mg(2+) serves as cofactor.

The catalysed reaction is geranylgeranyl diphosphate + 7 isopentenyl diphosphate = tri-trans,hepta-cis-undecaprenyl diphosphate + 7 diphosphate. In terms of biological role, catalyzes the sequential condensation of isopentenyl diphosphate (IPP) with geranylgeranyl diphosphate (GGPP) to yield (2Z,6Z,10Z,14Z,18Z,22Z,26Z,30E,34E,38E)-undecaprenyl diphosphate (tritrans,heptacis-UPP). It is probably the precursor of glycosyl carrier lipids. The protein is Tritrans,polycis-undecaprenyl-diphosphate synthase (geranylgeranyl-diphosphate specific) of Pyrococcus furiosus (strain ATCC 43587 / DSM 3638 / JCM 8422 / Vc1).